Consider the following 122-residue polypeptide: Large ribosomal subunit protein uL14c (122 aa).

It belongs to the universal ribosomal protein uL14 family. In terms of assembly, part of the 50S ribosomal subunit.

The protein localises to the plastid. It is found in the chloroplast. In terms of biological role, binds to 23S rRNA. This chain is Large ribosomal subunit protein uL14c, found in Physcomitrium patens (Spreading-leaved earth moss).